A 480-amino-acid polypeptide reads, in one-letter code: Glycogen synthase (480 aa).

Belongs to the glycosyltransferase 1 family. Bacterial/plant glycogen synthase subfamily.

The enzyme catalyses [(1-&gt;4)-alpha-D-glucosyl](n) + ADP-alpha-D-glucose = [(1-&gt;4)-alpha-D-glucosyl](n+1) + ADP + H(+). It functions in the pathway glycan biosynthesis; glycogen biosynthesis. Synthesizes alpha-1,4-glucan chains using ADP-glucose. The sequence is that of Glycogen synthase from Rhizobium etli (strain ATCC 51251 / DSM 11541 / JCM 21823 / NBRC 15573 / CFN 42).